An 81-amino-acid chain; its full sequence is Small ribosomal subunit protein bS16 (81 aa).

It belongs to the bacterial ribosomal protein bS16 family.

This Lachnospira eligens (strain ATCC 27750 / DSM 3376 / VPI C15-48 / C15-B4) (Eubacterium eligens) protein is Small ribosomal subunit protein bS16.